The following is an 85-amino-acid chain: Putative N.vectensis toxin 1 9 (85 aa).

A signal peptide spans 1–20 (MASFKIVIVCLALLVAVASA). Positions 21–36 (RRRDMMSDDELDYHFS) are excised as a propeptide. Disulfide bonds link cysteine 42-cysteine 82, cysteine 44-cysteine 72, and cysteine 65-cysteine 83.

Belongs to the sea anemone sodium channel inhibitory toxin family. Type II subfamily. As to expression, expressed in ectodermal glands and in clumps outside of the extodermal layer. Is not expressed in nematocytes. In adult female tissues, shows similar expression levels in mesenteries (gametes-producing tissue), tentacles, pharynx and physa.

It is found in the secreted. Its function is as follows. Binds to site 3 of voltage-gated sodium channels and inhibits the inactivation process. Is highly active on DmNav1/TipE (drosophila) and is only extremely weakly active on rat Nav1.4-beta-1/SCN4A-SCN1B, and on human Nav1.5-beta-1/SCN5A-beta-1. This reveals high specificity for arthropod over mammalian channels. In vivo, when released into the medium, this recombinant toxin induces impaired swimming, paralysis and death of the crustacean A.nauplii within several hours. Also causes paralysis of cherry shrimps immediately after injection at very low doses. Its effect on zebrafish (D.rerio) larvae is also rapid, since it induces tail twitching accompanied by impaired swimming after 20 minutes and complete paralysis within 45 minutes. It has also been observed to cause death of zebrafish larvae within 1 hour. The chain is Putative N.vectensis toxin 1 9 from Nematostella vectensis (Starlet sea anemone).